Reading from the N-terminus, the 977-residue chain is DNA-directed RNA polymerase 3A, chloroplastic (977 aa).

Residues M1–C72 constitute a chloroplast transit peptide. Residues D678, K753, and D910 contribute to the active site.

The protein belongs to the phage and mitochondrial RNA polymerase family.

It is found in the plastid. The protein localises to the chloroplast. It carries out the reaction RNA(n) + a ribonucleoside 5'-triphosphate = RNA(n+1) + diphosphate. Functionally, DNA-dependent RNA polymerase catalyzes the transcription of DNA into RNA using the four ribonucleoside triphosphates as substrates. The polypeptide is DNA-directed RNA polymerase 3A, chloroplastic (RPOT3-SYL) (Nicotiana tabacum (Common tobacco)).